The following is a 403-amino-acid chain: Phosphoglycerate kinase (403 aa).

Substrate is bound by residues 24–26 (DLN), Arg-39, 62–65 (HLGR), Arg-121, and Arg-161. ATP is bound by residues Lys-211, Gly-299, Glu-330, and 359–362 (GGDS).

It belongs to the phosphoglycerate kinase family. In terms of assembly, monomer.

It is found in the cytoplasm. The enzyme catalyses (2R)-3-phosphoglycerate + ATP = (2R)-3-phospho-glyceroyl phosphate + ADP. It participates in carbohydrate degradation; glycolysis; pyruvate from D-glyceraldehyde 3-phosphate: step 2/5. This is Phosphoglycerate kinase from Rhodococcus erythropolis (strain PR4 / NBRC 100887).